The chain runs to 221 residues: MERTGHAFADRQRLQRALTHASARGANAGTDYERFEFLGDRVLGLVVADMLLAAFPDAAEGELSLRLNALVNAEALSEIAEHIGLPDLIRAGSDVRGLEGRKRVNLRADALESLIAVLYLDGGLEAARAFIHKYWQPRSQASGAARRDAKTELQEWAHQAASAVPAYQIDSREGPDHDPLFTVSVRVGAFQPATGSGRSKREAEQAAAAALLLREGVWNAA.

Residues 1 to 123 (MERTGHAFAD…LIAVLYLDGG (123 aa)) form the RNase III domain. E36 contributes to the Mg(2+) binding site. Residue D40 is part of the active site. Positions 109 and 112 each coordinate Mg(2+). The active site involves E112. Residues 148–217 (DAKTELQEWA…AAALLLREGV (70 aa)) enclose the DRBM domain.

It belongs to the ribonuclease III family. Homodimer. Requires Mg(2+) as cofactor.

The protein localises to the cytoplasm. The catalysed reaction is Endonucleolytic cleavage to 5'-phosphomonoester.. Its function is as follows. Digests double-stranded RNA. Involved in the processing of primary rRNA transcript to yield the immediate precursors to the large and small rRNAs (23S and 16S). Processes some mRNAs, and tRNAs when they are encoded in the rRNA operon. Processes pre-crRNA and tracrRNA of type II CRISPR loci if present in the organism. This Mesorhizobium japonicum (strain LMG 29417 / CECT 9101 / MAFF 303099) (Mesorhizobium loti (strain MAFF 303099)) protein is Ribonuclease 3.